A 370-amino-acid polypeptide reads, in one-letter code: Histidinol-phosphate aminotransferase 1 (370 aa).

At lysine 222 the chain carries N6-(pyridoxal phosphate)lysine.

The protein belongs to the class-II pyridoxal-phosphate-dependent aminotransferase family. Histidinol-phosphate aminotransferase subfamily. In terms of assembly, homodimer. Pyridoxal 5'-phosphate serves as cofactor.

It catalyses the reaction L-histidinol phosphate + 2-oxoglutarate = 3-(imidazol-4-yl)-2-oxopropyl phosphate + L-glutamate. It participates in amino-acid biosynthesis; L-histidine biosynthesis; L-histidine from 5-phospho-alpha-D-ribose 1-diphosphate: step 7/9. This is Histidinol-phosphate aminotransferase 1 (hisC1) from Bacillus cereus (strain ATCC 14579 / DSM 31 / CCUG 7414 / JCM 2152 / NBRC 15305 / NCIMB 9373 / NCTC 2599 / NRRL B-3711).